Consider the following 446-residue polypeptide: Mitochondrial ribonuclease P protein 1 homolog (446 aa).

A mitochondrion-targeting transit peptide spans 1–24 (MLKHFARWRLGSQLLKGCAAPVRQ). A disordered region spans residues 41-67 (PQKKFVNPFSQPAPALSNDTISENKEE). 2 positions are modified to phosphoserine: Ser-50 and Ser-57. Thr-60 is modified (phosphothreonine). Ser-62 carries the phosphoserine modification. Residues 119 to 158 (LWQIEMKKEADQRKKAERAKEAERRVAEMRKEREENTHII) adopt a coiled-coil conformation. In terms of domain architecture, SAM-dependent MTase TRM10-type spans 179 to 373 (QNNRLTRAMQ…KHVPRRKVVQ (195 aa)).

It belongs to the class IV-like SAM-binding methyltransferase superfamily. TRM10 family. As to quaternary structure, component of mitochondrial ribonuclease P, a complex composed of rswl/MRPP1, scu/MRPP2 and mldr/MRPP3.

Its subcellular location is the mitochondrion. In terms of biological role, mitochondrial tRNA N1-methyltransferase involved in mitochondrial tRNA maturation. Component of mitochondrial ribonuclease P, a complex composed of rswl/MRPP1, scu/MRPP2 and mldr/MRPP3., which cleaves tRNA molecules in their 5'-ends. Essential for the structural and functional integrity of mitochondria. Function is essential for pupal development. The sequence is that of Mitochondrial ribonuclease P protein 1 homolog from Drosophila melanogaster (Fruit fly).